Here is a 500-residue protein sequence, read N- to C-terminus: Glycerol kinase (500 aa).

ADP is bound at residue Thr-17. Thr-17, Thr-18, and Ser-19 together coordinate ATP. Thr-17 is a sn-glycerol 3-phosphate binding site. Arg-21 lines the ADP pocket. The sn-glycerol 3-phosphate site is built by Arg-87, Glu-88, Tyr-139, and Asp-243. Arg-87, Glu-88, Tyr-139, Asp-243, and Gln-244 together coordinate glycerol. ADP contacts are provided by Thr-265 and Gly-308. ATP is bound by residues Thr-265, Gly-308, Gln-312, and Gly-409. Residues Gly-409 and Asn-413 each coordinate ADP.

The protein belongs to the FGGY kinase family.

It carries out the reaction glycerol + ATP = sn-glycerol 3-phosphate + ADP + H(+). The protein operates within polyol metabolism; glycerol degradation via glycerol kinase pathway; sn-glycerol 3-phosphate from glycerol: step 1/1. Inhibited by fructose 1,6-bisphosphate (FBP). In terms of biological role, key enzyme in the regulation of glycerol uptake and metabolism. Catalyzes the phosphorylation of glycerol to yield sn-glycerol 3-phosphate. The polypeptide is Glycerol kinase (Pseudomonas fluorescens (strain Pf0-1)).